Reading from the N-terminus, the 121-residue chain is Nitrogen fixation nifHD region GlnB-like protein 2 (121 aa).

The protein belongs to the P(II) protein family.

Its function is as follows. Could be involved in the regulation of nitrogen fixation. This Methanothermobacter marburgensis (strain ATCC BAA-927 / DSM 2133 / JCM 14651 / NBRC 100331 / OCM 82 / Marburg) (Methanobacterium thermoautotrophicum) protein is Nitrogen fixation nifHD region GlnB-like protein 2 (glnBB).